We begin with the raw amino-acid sequence, 631 residues long: Occlusion-derived virus envelope protein E66 (631 aa).

Belongs to the baculoviridae E66 family.

The protein resides in the virion membrane. Component of the polyhedra envelope. This is Occlusion-derived virus envelope protein E66 from Leucania separata nucleopolyhedrovirus (LsNPV).